The chain runs to 129 residues: Gene 58 protein (129 aa).

Positions 87–129 are disordered; it reads GNIPVQRKPARKPSRRVFGESRSSGSSGSTVRPGIRGRSTPWS. Over residues 106–115 the composition is skewed to low complexity; that stretch reads ESRSSGSSGS.

This is Gene 58 protein (58) from Mycobacterium (Mycobacteriophage D29).